Consider the following 1294-residue polypeptide: Leucine-rich repeat receptor protein kinase MSP1 (1294 aa).

An N-terminal signal peptide occupies residues methionine 1–alanine 22. LRR repeat units follow at residues phenylalanine 88–leucine 112, glutamine 113–leucine 136, methionine 138–leucine 160, glutamine 161–leucine 184, and asparagine 186–asparagine 207. N-linked (GlcNAc...) asparagine glycans are attached at residues asparagine 198, asparagine 207, and asparagine 220. 23 LRR repeats span residues leucine 232–leucine 256, asparagine 258–leucine 280, glutamine 282–leucine 304, serine 305–leucine 328, asparagine 330–cysteine 352, lysine 353–leucine 376, alanine 378–tryptophan 400, lysine 401–leucine 422, glutamine 423–alanine 446, asparagine 447–glycine 469, threonine 471–glutamate 493, leucine 494–serine 517, threonine 519–leucine 541, serine 542–leucine 565, arginine 566–cysteine 589, lysine 591–leucine 613, threonine 614–glycine 637, leucine 649–cysteine 673, methionine 675–leucine 697, threonine 698–leucine 721, valine 722–isoleucine 745, leucine 746–asparagine 770, and tyrosine 772–glycine 794. Asparagine 330 and asparagine 359 each carry an N-linked (GlcNAc...) asparagine glycan. N-linked (GlcNAc...) asparagine glycosylation is found at asparagine 458 and asparagine 472. 3 N-linked (GlcNAc...) asparagine glycosylation sites follow: asparagine 567, asparagine 570, and asparagine 601. 3 N-linked (GlcNAc...) asparagine glycosylation sites follow: asparagine 687, asparagine 699, and asparagine 704. 3 N-linked (GlcNAc...) asparagine glycosylation sites follow: asparagine 805, asparagine 821, and asparagine 832. LRR repeat units follow at residues phenylalanine 822 to leucine 846 and serine 848 to isoleucine 870. The helical transmembrane segment at isoleucine 917–leucine 937 threads the bilayer. A Protein kinase domain is found at phenylalanine 1002–glutamate 1282. ATP contacts are provided by residues isoleucine 1008 to valine 1016 and lysine 1030. Residue aspartate 1129 is the Proton acceptor of the active site.

The protein belongs to the protein kinase superfamily. Ser/Thr protein kinase family. In terms of assembly, interacts with TDL1A. Expressed in anthers and ovules during meiosis.

It localises to the cell membrane. The catalysed reaction is L-seryl-[protein] + ATP = O-phospho-L-seryl-[protein] + ADP + H(+). It carries out the reaction L-threonyl-[protein] + ATP = O-phospho-L-threonyl-[protein] + ADP + H(+). Functionally, receptor-like kinase that plays important roles in restricting the number of cells entering into male and female sporogenesis. Involved in cell specification during anther development and initiation of anther wall formation. The protein is Leucine-rich repeat receptor protein kinase MSP1 of Oryza sativa subsp. japonica (Rice).